The chain runs to 566 residues: Cyclin G (566 aa).

Residues Met285 to Met368 form the Cyclin N-terminal domain.

The protein belongs to the cyclin family. Cyclin G subfamily. Interacts with corto. Interacts with the cyclin-dependent kinases Cdk2 and Cdk4. Interacts with Brca2 and Rad9. Interacts with polycomb protein Asx. Interacts with protein phosphatase 2A subunit wdb.

The protein localises to the chromosome. Its function is as follows. Cyclin with roles in multiple processes including transcription, meiotic recombination repair, cell cycle regulation, and promotion of normal growth and metabolism. Binds to the promoter region of the homeobox gene Abd-B and is involved in maintaining Abd-B expression in the pupal epithelium. Involved in the transcriptional repression of the homeotic genes Scr and Ubx. Plays a role in meiotic recombination repair of DNA double-strand breaks which ensures efficient translation of grk and promotes grk activity in the oocyte, leading to oocyte dorso-ventral axis formation following secretion of grk from the oocyte and its binding to Egfr in the directly overlying follicle cells. Negatively regulates the binding of serine/threonine-protein kinase Akt1 to the protein phosphatase 2A subunit wdb, promoting normal growth and metabolism. Required for the formation of bilateral symmetry. Negatively regulates cell cycle progression by preventing G1 to S transition and retarding S-phase progression. This Drosophila melanogaster (Fruit fly) protein is Cyclin G.